Here is a 694-residue protein sequence, read N- to C-terminus: Heat shock protein HSP 90-alpha (694 aa).

A phosphothreonine; by PRKDC mark is found at Thr-5 and Thr-7. An interaction with NR3C1 region spans residues Asp-9–Lys-236. Asn-51 lines the ATP pocket. Residues Lys-58 and Lys-84 each carry the N6-acetyllysine modification. ATP is bound by residues Asp-93, Lys-112, and Phe-138. A compositionally biased stretch (basic and acidic residues) spans Lys-228 to Lys-241. The segment at Lys-228 to Arg-275 is disordered. Residues Ser-231 and Ser-249 each carry the phosphoserine modification. Over residues Pro-242–Glu-255 the composition is skewed to acidic residues. Over residues Lys-256–Lys-268 the composition is skewed to basic and acidic residues. The segment at Asp-258–Ala-578 is interaction with NR3C1. Residues Ile-261–Arg-582 are interaction with FNIP2 and TSC1. The interaction with FLCN and FNIP1 stretch occupies residues Ile-261 to Asp-694. Tyr-289 bears the Phosphotyrosine mark. Position 376 (Arg-376) interacts with ATP. Lys-419 is modified (N6-acetyllysine). Ser-429 is modified (phosphoserine). The residue at position 434 (Lys-434) is an N6-acetyllysine. Ser-452 is subject to Phosphoserine. Lys-465 is subject to N6-acetyllysine. Tyr-468 is subject to Phosphotyrosine. Lys-547 is modified (N6-acetyllysine). Position 560 is an S-nitrosocysteine (Cys-560). The tract at residues Met-590–Val-693 is interaction with NR1D1. Phosphoserine is present on Ser-603. The tract at residues Gln-644 to Asp-694 is required for homodimerization. The disordered stretch occupies residues Glu-662–Asp-694. The segment covering Asp-668–Glu-677 has biased composition (low complexity). Positions Asp-685 to Asp-694 match the TPR repeat-binding motif. An essential for interaction with SMYD3, TSC1 and STIP1/HOP region spans residues Met-690–Asp-694. An essential for interaction with SGTA and TTC1 region spans residues Glu-691–Asp-694.

It belongs to the heat shock protein 90 family. As to quaternary structure, homodimer. Identified in NR3C1/GCR steroid receptor-chaperone complexes formed at least by NR3C1, HSP90AA1 and a variety of proteins containing TPR repeats such as FKBP4, FKBP5, PPID, PPP5C or STIP1. Forms a complex containing HSP90AA1, TSC1 and TSC2; TSC1 is required to recruit TCS2 to the complex. The closed form interacts (via the middle domain and TPR repeat-binding motif) with co-chaperone TSC1 (via C-terminus). Interacts with TOM34. Interacts with TERT; the interaction, together with PTGES3, is required for correct assembly and stabilization of the TERT holoenzyme complex. Interacts with CHORDC1 and DNAJC7. Interacts with STUB1 and UBE2N; may couple the chaperone and ubiquitination systems. Interacts (via TPR repeat-binding motif) with PPP5C (via TPR repeats); the interaction is direct and activates PPP5C phosphatase activity. Following LPS binding, may form a complex with CXCR4, GDF5 and HSPA8. Interacts with KSR1. Interacts with co-chaperone CDC37 (via C-terminus); the interaction inhibits HSP90AA1 ATPase activity. May interact with NWD1. Interacts with FNIP1 and FNIP2; the interaction inhibits HSP90AA1 ATPase activity. Interacts with co-chaperone AHSA1 (phosphorylated on 'Tyr-223'); the interaction activates HSP90AA1 ATPase activity and results in the dissociation of TSC1 from HSP90AA1. Interacts with FLCN in the presence of FNIP1. Interacts with HSP70, STIP1 and PTGES3. Interacts with SMYD3; this interaction enhances SMYD3 histone-lysine N-methyltransferase. Interacts with SGTA (via TPR repeats). Interacts with TTC1 (via TPR repeats). Interacts with HSF1 in an ATP-dependent manner. Interacts with MET; the interaction suppresses MET kinase activity. Interacts with ERBB2 in an ATP-dependent manner; the interaction suppresses ERBB2 kinase activity. Interacts with HIF1A, KEAP1 and RHOBTB2. Interacts with HSF1; this interaction is decreased in a IER5-dependent manner, promoting HSF1 accumulation in the nucleus, homotrimerization and DNA-binding activities. Interacts with STUB1 and SMAD3. Interacts with HSP90AB1; interaction is constitutive. Interacts with HECTD1 (via N-terminus). Interacts with NR3C1 (via domain NR LBD) and NR1D1 (via domain NR LBD). Interacts with NLPR12. Interacts with PDCL3. Interacts with TOMM70; the interaction is required for preprotein mitochondrial import. Interacts with TOMM70, IRF3 and TBK1; the interactions are direct and mediate the association of TOMM70 with IRF3 and TBK1. Forms a complex with ASL, ASS1 and NOS2; the complex regulates cell-autonomous L-arginine synthesis and citrulline recycling while channeling extracellular L-arginine to nitric oxide synthesis pathway. Post-translationally, ISGylated. S-nitrosylated; negatively regulates the ATPase activity and the activation of eNOS by HSP90AA1. In terms of processing, ubiquitinated via 'Lys-63'-linked polyubiquitination by HECTD1. Ubiquitination promotes translocation into the cytoplasm away from the membrane and secretory pathways.

Its subcellular location is the nucleus. It localises to the cytoplasm. The protein localises to the melanosome. The protein resides in the cell membrane. It is found in the mitochondrion. It catalyses the reaction ATP + H2O = ADP + phosphate + H(+). With respect to regulation, in the resting state, through the dimerization of its C-terminal domain, HSP90 forms a homodimer which is defined as the open conformation. Upon ATP-binding, the N-terminal domain undergoes significant conformational changes and comes in contact to form an active closed conformation. After HSP90 finishes its chaperoning tasks of assisting the proper folding, stabilization and activation of client proteins under the active state, ATP molecule is hydrolyzed to ADP which then dissociates from HSP90 and directs the protein back to the resting state. Co-chaperone TSC1 promotes ATP binding and inhibits HSP90AA1 ATPase activity. Binding to phosphorylated AHSA1 promotes HSP90AA1 ATPase activity. Inhibited by geldanamycin, Ganetespib (STA-9090) and SNX-2112. In terms of biological role, molecular chaperone that promotes the maturation, structural maintenance and proper regulation of specific target proteins involved for instance in cell cycle control and signal transduction. Undergoes a functional cycle that is linked to its ATPase activity which is essential for its chaperone activity. This cycle probably induces conformational changes in the client proteins, thereby causing their activation. Interacts dynamically with various co-chaperones that modulate its substrate recognition, ATPase cycle and chaperone function. Engages with a range of client protein classes via its interaction with various co-chaperone proteins or complexes, that act as adapters, simultaneously able to interact with the specific client and the central chaperone itself. Recruitment of ATP and co-chaperone followed by client protein forms a functional chaperone. After the completion of the chaperoning process, properly folded client protein and co-chaperone leave HSP90 in an ADP-bound partially open conformation and finally, ADP is released from HSP90 which acquires an open conformation for the next cycle. Plays a critical role in mitochondrial import, delivers preproteins to the mitochondrial import receptor TOMM70. Apart from its chaperone activity, it also plays a role in the regulation of the transcription machinery. HSP90 and its co-chaperones modulate transcription at least at three different levels. In the first place, they alter the steady-state levels of certain transcription factors in response to various physiological cues. Second, they modulate the activity of certain epigenetic modifiers, such as histone deacetylases or DNA methyl transferases, and thereby respond to the change in the environment. Third, they participate in the eviction of histones from the promoter region of certain genes and thereby turn on gene expression. Binds bacterial lipopolysaccharide (LPS) and mediates LPS-induced inflammatory response, including TNF secretion by monocytes. Antagonizes STUB1-mediated inhibition of TGF-beta signaling via inhibition of STUB1-mediated SMAD3 ubiquitination and degradation. Mediates the association of TOMM70 with IRF3 or TBK1 in mitochondrial outer membrane which promotes host antiviral response. The chain is Heat shock protein HSP 90-alpha (HSP90AA1) from Oryctolagus cuniculus (Rabbit).